Here is a 48-residue protein sequence, read N- to C-terminus: Large ribosomal subunit protein bL32 (48 aa).

The interval Val-28–Tyr-48 is disordered.

The protein belongs to the bacterial ribosomal protein bL32 family.

The protein is Large ribosomal subunit protein bL32 of Campylobacter concisus (strain 13826).